The primary structure comprises 98 residues: NADH-ubiquinone oxidoreductase chain 4L (98 aa).

Helical transmembrane passes span 2–22, 26–46, and 58–79; these read PSTF…TLMF, LMST…MTSV, and PIPI…ALLV.

This sequence belongs to the complex I subunit 4L family. Core subunit of respiratory chain NADH dehydrogenase (Complex I) which is composed of 45 different subunits.

The protein resides in the mitochondrion inner membrane. The enzyme catalyses a ubiquinone + NADH + 5 H(+)(in) = a ubiquinol + NAD(+) + 4 H(+)(out). Its function is as follows. Core subunit of the mitochondrial membrane respiratory chain NADH dehydrogenase (Complex I) which catalyzes electron transfer from NADH through the respiratory chain, using ubiquinone as an electron acceptor. Part of the enzyme membrane arm which is embedded in the lipid bilayer and involved in proton translocation. This is NADH-ubiquinone oxidoreductase chain 4L from Mus musculus (Mouse).